The chain runs to 280 residues: Proteasome subunit beta (280 aa).

The propeptide at 1 to 53 is removed in mature form; by autocatalysis; it reads MSEYSAGRSGFSPAYLDRVGSSFTDFLAAAAPHLLPGSRPVPQIPVGNVTPHG. Threonine 54 functions as the Nucleophile in the catalytic mechanism.

This sequence belongs to the peptidase T1B family. The 20S proteasome core is composed of 14 alpha and 14 beta subunits that assemble into four stacked heptameric rings, resulting in a barrel-shaped structure. The two inner rings, each composed of seven catalytic beta subunits, are sandwiched by two outer rings, each composed of seven alpha subunits. The catalytic chamber with the active sites is on the inside of the barrel. Has a gated structure, the ends of the cylinder being occluded by the N-termini of the alpha-subunits. Is capped by the proteasome-associated ATPase, ARC.

Its subcellular location is the cytoplasm. The enzyme catalyses Cleavage of peptide bonds with very broad specificity.. It participates in protein degradation; proteasomal Pup-dependent pathway. The formation of the proteasomal ATPase ARC-20S proteasome complex, likely via the docking of the C-termini of ARC into the intersubunit pockets in the alpha-rings, may trigger opening of the gate for substrate entry. Interconversion between the open-gate and close-gate conformations leads to a dynamic regulation of the 20S proteasome proteolysis activity. Its function is as follows. Component of the proteasome core, a large protease complex with broad specificity involved in protein degradation. The sequence is that of Proteasome subunit beta from Geodermatophilus obscurus (strain ATCC 25078 / DSM 43160 / JCM 3152 / CCUG 61914 / KCC A-0152 / KCTC 9177 / NBRC 13315 / NRRL B-3577 / G-20).